Consider the following 411-residue polypeptide: F-box protein At4g19940 (411 aa).

The F-box domain maps to 29-75 (RQPIPEIPFDLVIEILTRLPAKSLMRFKSVSKLWSSLICSRNFTNRL).

The sequence is that of F-box protein At4g19940 from Arabidopsis thaliana (Mouse-ear cress).